The sequence spans 2551 residues: MENFKYRNNENDVAIIGIGFRLPGCKNFTPNELWNNLKNGFNGVVELSNRWSDNFYTMGKVSSAYAGLLPFDELKSFDPLFFGINPTEVPTIDPQQRILLKCTWEAFEDAGIDPIKIRGSNTSVFIGTSTNDYQRIIREKDQTITNAFGTSLHATSNRISYCFDFRGPSMTLDTACSSSLNCVKLGYQSIRDGTSNLSIAGGVNLIIDPYFTASISDLNILSKTGSCKTFDASADGFARAEGSGIIVMKNLKQAMIDGDKIYCVIKGASSNVDGGGLQDKSNFYAPSSLSQCNNIKMALKSTNGTVEPKDISYFECHGTGTPTGDPIETRGISMVFNDESRSKENPLLIGSIKSNIGHLEAGSGIASLIKCCLMFKNKCFAPNINFKVPNPKIKFEEWNLKVVTEPIQFTKSNTCIGLSNFGVTGSNCCLILSQFNNNNNDNQIVGNNNNIKSNKEYLIPFSSNSVKSLENYQQLLIKNGENEFKFLEFIKHQIFTKPTSLYQRSVVIASSWDQFNNAKIMKTSNSKSSNISIERNNPITVFVFCGQGSQYDRMGLELYNNDFIFKESMDLLDNKLSKYYGYSVLEKLRNCDSKSIQHPMIAQPVMCMFNISLFELYKHWGIEVSFIIGHSLGEIPAAYCSGMINIDTLCYLIYHRSIAQTKTHTNGRMLSINISADEYFSQYSKQYPDIEIACFNSPTSIVIAGNEQKLNEISEILKEKGIFSAMLASLSSFHTSSQNKVKEDIVNKQFDSKQSEIPIFSTVTTNLFDSVTSPFNSSYVFNNIVSPVKFSQTISNLYKHIESNQLGNDIVFIELAPHPTLQFYLKQMIPKPTNDDNSIEFKVSVYSALNKKNNDIEEIQRTISQLYCDNGYNVNFKCQFQHDDTHGSINSNINQLSNISLPHYQWDDEKYWKEDPSISKLIVNGPQTDNLGYLNENSPNSKSYETFIDIKRPPFQYLKGHMVKGKYYFPGCGYIDNLLKIYKSQDLTINQMGFKSPLIFIEGVNQALQTNIFKKSTSNTTTNNNDEFRVEYHFNDQKTNRWILSSFGDFQLSNHSSNSDNLEKINIKQLIQNQCNLTKLSRDELYSHIKSKTGLTYNGVFQGVNKCYLGENCSLSEVSLELKREPSSFFNTAVLDTCLHGMLCLLEEQSQLVFDRIEGFKYHSSNVPTSEEEMKIHSNIYVYSTINPSRIGDSYSASIVIMMEDGTVLIEIENAVCTSLTPIKESISVKYPTNQLFSMYLQSKDSPIPSPLNFKSLYNQNQQQLKIDKQFTDWMQKCEKFISNQFFKNIEKRNPEINLEILNSKTIIELKSKYCQNLKNERLFQFVFETIKQLGVNAYDDDDDLTIDSSEDRKSIYEILIKSTKVIPKLLFPLEDEDLTIDSPQSLFENGLLDRFYNNPNLMTNQCQLIAQIIKESLKPLLNKKMVFRILEMGGGTCSLSVVVLNLINQLLLENPSFEIDIEYTWSDISPSFISAAKEKLSHIDKRINILYRSIDIEQPFIEKQDLSPSYYDFVIMSNVLHVVKKLSPSLDEIHKILTPNGHLLFVEIPYKELISDSIFGAFNQWWAFEDTDIRKDRCSIPPNQWIQVLSNHNYKDTIVSDNKECTWCCFVIHSQKPSLLELSKKIECNQYDNIIVFGNENSQDNFTKSIKLSYNNNIIKWVSNIVEIKKFIKLNIITNNSIIYFTKGIEELTIDNFKLINFQYIQINQLLLKYESKCKNVLVTRDCDGSNYLASSLIGAARYFDEYRQLELFTLDFDNDTIQSCDECSSSSCSNLIKLIEPLIDPKINIQREFLIRNNRVYFERAKLETNLKKSFKSESFENSNKLISTLNFNLDYQLQSKPFKQLLQNEIEVEIKATGINYRDYLVFTGSLPIEKTNHNGISNQPEFGVDFSGIVTKVGGGGGNGEFKVGDRVYGIGHNTTSSHITIDSRYASLIPNSLDYIEASSITSSYILSLYGIFDIGNLDIQDNESILIHSGTGGIGLSALNSLRWKGHKSHLFVTVSSKEKEQYLRDNYGSFITGIYSNKDKNYPKLIKEKLNQLGSNKQGVDLILSSLPNGDDNLNFKCLAKNGRIIDLSNNIDLFNISKSKIKKLLNTINDGFESGELQVIPIIEFSNSNIRDAIEFINERQHIGKIVISHDDSNLLIDLINKHSNQPNYSILKSDYQISQSNLGKNILITGQSGIVLEILKWIIKFSNSIENVIILSKSLMKWELELLIGKTMKKANNKIKFHFKSVDVSDSIQVENSINQILNDNPNIVNIDSIFHFAFTQITKKVEEIDMESLNVSHNAKTIGAINLHNQSINRNWRLNNFVMASSATSIIGSTDQCSYVCANTVLDSLSKYRKSIGLPSICTNYGAIESAGFVSKNESVAAMFNGIGIISISTDLILGTLDLQIQNQQSSTNLMLSDFNFLNFVNNNLQLSLISKFDFQTNLAKNQVNEKLQNQTQNQNLQIQSPSSTTDCQTIIKDSFLHKISEVLSIDISKLNLDLKLLDYGADSLAIVQIKNWIDMEVSPNLIVIQQLQTFTITSSIQYTINSFLKKKVQSQE.

The 425-residue stretch at E10–Q434 folds into the Ketosynthase family 3 (KS3) domain. Residues C176, H317, and H358 each act as for beta-ketoacyl synthase activity in the active site. Residues G621–Y654 are acyl/malonyl transferase. Catalysis depends on S631, which acts as the For acyl/malonyl transferase activity. Positions T928 to S1057 are N-terminal hotdog fold. One can recognise a PKS/mFAS DH domain in the interval T928 to S1226. H961 acts as the Proton acceptor; for dehydratase activity in catalysis. Positions N1076–S1226 are C-terminal hotdog fold. D1136 (proton donor; for dehydratase activity) is an active-site residue. The 78-residue stretch at D2465 to F2542 folds into the Carrier domain. S2502 bears the O-(pantetheine 4'-phosphoryl)serine mark.

It depends on pantetheine 4'-phosphate as a cofactor.

Functionally, probable polyketide synthase. This chain is Probable polyketide synthase 13 (pks13), found in Dictyostelium discoideum (Social amoeba).